The sequence spans 277 residues: UPF0276 protein PP_0992 (277 aa).

Belongs to the UPF0276 family.

In Pseudomonas putida (strain ATCC 47054 / DSM 6125 / CFBP 8728 / NCIMB 11950 / KT2440), this protein is UPF0276 protein PP_0992.